The primary structure comprises 191 residues: General negative regulator of transcription subunit 2 (191 aa).

The protein belongs to the CNOT2/3/5 family. In terms of assembly, forms a NOT protein complex that comprises NOT1, NOT2, NOT3, NOT4 and NOT5. Subunit of the 1.0 MDa CCR4-NOT core complex that contains CCR4, CAF1, NOT1, NOT2, NOT3, NOT4, NOT5, CAF40 and CAF130. In the complex interacts with NOT1 and NOT5. The core complex probably is part of a less characterized 1.9 MDa CCR4-NOT complex.

The protein localises to the cytoplasm. It localises to the nucleus. In terms of biological role, acts as a component of the CCR4-NOT core complex, which in the nucleus seems to be a general transcription factor, and in the cytoplasm the major mRNA deadenylase involved in mRNA turnover. NOT2 is required for the integrity of the complex. The NOT protein subcomplex negatively regulates the basal and activated transcription of many genes. Preferentially affects TC-type TATA element-dependent transcription. Could directly or indirectly inhibit component(s) of the general transcription machinery. The chain is General negative regulator of transcription subunit 2 (CDC36) from Saccharomyces cerevisiae (strain ATCC 204508 / S288c) (Baker's yeast).